The chain runs to 265 residues: Cytochrome b-c1 complex subunit Rieske, mitochondrial (265 aa).

The N-terminal 53 residues, 1 to 53, are a transit peptide targeting the mitochondrion; it reads MLRVAGRRLSSSAARSSSTFFTRSSFTVTDDSSPARSPSPSLTSSFLDQIRGF. Residues 54-102 are Mitochondrial matrix-facing; sequence SSNSVSPAHQLGLVSDLPATVAAIKNPSSKIVYDDSNHERYPPGDPSKR. A helical transmembrane segment spans residues 103–125; that stretch reads AFAYFVLTGGRFVYASSVRLLIL. Topologically, residues 126-265 are mitochondrial intermembrane; sequence KFVLSMSASK…FLEENKLLIG (140 aa). In terms of domain architecture, Rieske spans 175-263; sequence IKLANSVDLG…YSFLEENKLL (89 aa). Cys208, His210, Cys227, and His230 together coordinate [2Fe-2S] cluster. Residues Cys213 and Cys229 are joined by a disulfide bond.

This sequence belongs to the Rieske iron-sulfur protein family. Component of the ubiquinol-cytochrome c oxidoreductase (cytochrome b-c1 complex, complex III, CIII), a multisubunit enzyme composed of 3 respiratory subunits cytochrome b, cytochrome c1 and Rieske protein, 2 core protein subunits, and several low-molecular weight protein subunits. The complex exists as an obligatory dimer and forms supercomplexes (SCs) in the inner mitochondrial membrane with cytochrome c oxidase (complex IV, CIV). The cofactor is [2Fe-2S] cluster.

It is found in the mitochondrion inner membrane. The enzyme catalyses a quinol + 2 Fe(III)-[cytochrome c](out) = a quinone + 2 Fe(II)-[cytochrome c](out) + 2 H(+)(out). In terms of biological role, component of the ubiquinol-cytochrome c oxidoreductase, a multisubunit transmembrane complex that is part of the mitochondrial electron transport chain which drives oxidative phosphorylation. The respiratory chain contains 3 multisubunit complexes succinate dehydrogenase (complex II, CII), ubiquinol-cytochrome c oxidoreductase (cytochrome b-c1 complex, complex III, CIII) and cytochrome c oxidase (complex IV, CIV), that cooperate to transfer electrons derived from NADH and succinate to molecular oxygen, creating an electrochemical gradient over the inner membrane that drives transmembrane transport and the ATP synthase. The cytochrome b-c1 complex catalyzes electron transfer from ubiquinol to cytochrome c, linking this redox reaction to translocation of protons across the mitochondrial inner membrane, with protons being carried across the membrane as hydrogens on the quinol. In the process called Q cycle, 2 protons are consumed from the matrix, 4 protons are released into the intermembrane space and 2 electrons are passed to cytochrome c. The Rieske protein is a catalytic core subunit containing a [2Fe-2S] iron-sulfur cluster. It cycles between 2 conformational states during catalysis to transfer electrons from the quinol bound in the Q(0) site in cytochrome b to cytochrome c1. This chain is Cytochrome b-c1 complex subunit Rieske, mitochondrial (FES1), found in Solanum tuberosum (Potato).